Here is a 131-residue protein sequence, read N- to C-terminus: Probable flagellum biosynthesis repressor protein FlbT (131 aa).

Belongs to the FlbT family.

In terms of biological role, has a post-transcriptional repressor function in flagellum biogenesis. Associates with the 5'-UTR of fljK mRNA and promotes its degradation. This chain is Probable flagellum biosynthesis repressor protein FlbT, found in Caulobacter sp. (strain K31).